The chain runs to 466 residues: 3-isopropylmalate dehydratase large subunit (466 aa).

Cys-347, Cys-407, and Cys-410 together coordinate [4Fe-4S] cluster.

This sequence belongs to the aconitase/IPM isomerase family. LeuC type 1 subfamily. In terms of assembly, heterodimer of LeuC and LeuD. [4Fe-4S] cluster is required as a cofactor.

The catalysed reaction is (2R,3S)-3-isopropylmalate = (2S)-2-isopropylmalate. Its pathway is amino-acid biosynthesis; L-leucine biosynthesis; L-leucine from 3-methyl-2-oxobutanoate: step 2/4. Catalyzes the isomerization between 2-isopropylmalate and 3-isopropylmalate, via the formation of 2-isopropylmaleate. In Shigella flexneri, this protein is 3-isopropylmalate dehydratase large subunit.